A 152-amino-acid chain; its full sequence is Transcriptional repressor NrdR (152 aa).

A zinc finger lies at 3 to 33 (CSICKKGETSVVDSRPTEDGTAIRRRRLCVC). One can recognise an ATP-cone domain in the interval 48–138 (IMVVKKNGRK…VYRNFREEKD (91 aa)).

The protein belongs to the NrdR family. The cofactor is Zn(2+).

Negatively regulates transcription of bacterial ribonucleotide reductase nrd genes and operons by binding to NrdR-boxes. The polypeptide is Transcriptional repressor NrdR (Pelagibacter ubique (strain HTCC1062)).